A 670-amino-acid chain; its full sequence is DNA ligase (670 aa).

Residues 35 to 39, 84 to 85, and Glu-116 contribute to the NAD(+) site; these read DSVYD and SL. Residue Lys-118 is the N6-AMP-lysine intermediate of the active site. 4 residues coordinate NAD(+): Arg-139, Glu-176, Lys-293, and Lys-317. Positions 411, 414, 429, and 435 each coordinate Zn(2+). In terms of domain architecture, BRCT spans 592 to 670; sequence VVKSEIAGKT…EEAFLKLLKS (79 aa).

Belongs to the NAD-dependent DNA ligase family. LigA subfamily. Mg(2+) serves as cofactor. It depends on Mn(2+) as a cofactor.

It carries out the reaction NAD(+) + (deoxyribonucleotide)n-3'-hydroxyl + 5'-phospho-(deoxyribonucleotide)m = (deoxyribonucleotide)n+m + AMP + beta-nicotinamide D-nucleotide.. Functionally, DNA ligase that catalyzes the formation of phosphodiester linkages between 5'-phosphoryl and 3'-hydroxyl groups in double-stranded DNA using NAD as a coenzyme and as the energy source for the reaction. It is essential for DNA replication and repair of damaged DNA. The chain is DNA ligase from Coxiella burnetii (strain RSA 331 / Henzerling II).